The sequence spans 597 residues: Elongation factor 4 (597 aa).

Residues D2–K184 enclose the tr-type G domain. GTP contacts are provided by residues D14 to T19 and N131 to D134.

It belongs to the TRAFAC class translation factor GTPase superfamily. Classic translation factor GTPase family. LepA subfamily.

The protein localises to the cell inner membrane. The catalysed reaction is GTP + H2O = GDP + phosphate + H(+). Required for accurate and efficient protein synthesis under certain stress conditions. May act as a fidelity factor of the translation reaction, by catalyzing a one-codon backward translocation of tRNAs on improperly translocated ribosomes. Back-translocation proceeds from a post-translocation (POST) complex to a pre-translocation (PRE) complex, thus giving elongation factor G a second chance to translocate the tRNAs correctly. Binds to ribosomes in a GTP-dependent manner. The sequence is that of Elongation factor 4 from Paraburkholderia phytofirmans (strain DSM 17436 / LMG 22146 / PsJN) (Burkholderia phytofirmans).